Consider the following 255-residue polypeptide: 3-oxoacyl-[acyl-carrier-protein] reductase MabA (255 aa).

NADP(+) is bound by residues 33–35, Arg-55, 69–70, Gly-98, Tyr-161, Lys-165, Ile-194, and Arg-205; these read RGI and DV. Residue Tyr-161 is the Proton acceptor of the active site.

It belongs to the short-chain dehydrogenases/reductases (SDR) family. Homotetramer.

The protein resides in the secreted. Its subcellular location is the cell wall. The enzyme catalyses a (3R)-hydroxyacyl-[ACP] + NADP(+) = a 3-oxoacyl-[ACP] + NADPH + H(+). It participates in lipid metabolism; mycolic acid biosynthesis. Its function is as follows. Part of the mycobacterial fatty acid elongation system FAS-II, which is involved in mycolic acid biosynthesis. Catalyzes the NADPH-dependent reduction of beta-ketoacyl derivatives, the second step of the FAS-II elongation cycle. This is 3-oxoacyl-[acyl-carrier-protein] reductase MabA from Mycobacterium avium.